An 86-amino-acid polypeptide reads, in one-letter code: UPF0457 protein SAUSA300_2132 (86 aa).

It belongs to the UPF0457 family.

The chain is UPF0457 protein SAUSA300_2132 from Staphylococcus aureus (strain USA300).